A 63-amino-acid polypeptide reads, in one-letter code: Ct-IT2 (63 aa).

An LCN-type CS-alpha/beta domain is found at Lys1–Gly63. 4 disulfides stabilise this stretch: Cys11/Cys62, Cys15/Cys36, Cys22/Cys43, and Cys26/Cys45. The residue at position 63 (Gly63) is a Glycine amide.

As to expression, expressed by the venom gland.

The protein resides in the secreted. In terms of biological role, beta toxins bind voltage-independently at site-4 of sodium channels (Nav) and shift the voltage of activation toward more negative potentials thereby affecting sodium channel activation and promoting spontaneous and repetitive firing. Is highly active on insects, since it provokes paralysis and death when injected into crickets. The sequence is that of Ct-IT2 from Centruroides tecomanus (Scorpion).